Here is a 360-residue protein sequence, read N- to C-terminus: MWTSKTISFTLFITTTLLGSCNASAKAKTQPLFPAILIFGDSTVDTGNNNYPSQTIFRAKHVPYGIDLPNHSPNGRFSNGKIFSDIIATKLNIKQFVPPFLQPNLTDQEIVTGVCFASAGAGYDDQTSLTTQAIRVSEQPNMFKSYIARLKSIVGDKKAMKIINNALVVVSAGPNDFILNYYEVPSWRRMYPSISDYQDFVLSRLNNFVKELYSLGCRKILVGGLPPMGCLPIQMTAQFRNVLRFCLEQENRDSVLYNQKLQKLLPQTQASLTGSKILYSDVYDPMMEMLQNPSKYGFKETTRGCCGTGFLETSFMCNAYSSMCQNRSEFLFFDSIHPSEATYNYIGNVLDTKIRGWLKA.

The first 23 residues, 1-23 (MWTSKTISFTLFITTTLLGSCNA), serve as a signal peptide directing secretion. The N-linked (GlcNAc...) asparagine glycan is linked to asparagine 22. Catalysis depends on serine 42, which acts as the Nucleophile. Asparagine 104 and asparagine 326 each carry an N-linked (GlcNAc...) asparagine glycan. Residues aspartate 334 and histidine 337 contribute to the active site.

Belongs to the 'GDSL' lipolytic enzyme family.

The protein resides in the secreted. This Arabidopsis thaliana (Mouse-ear cress) protein is GDSL esterase/lipase At1g58430.